The primary structure comprises 207 residues: Large ribosomal subunit protein bL25 (207 aa).

The tract at residues 185 to 207 (DLEEETGEAAAEAEAPAEEGAES) is disordered.

It belongs to the bacterial ribosomal protein bL25 family. CTC subfamily. Part of the 50S ribosomal subunit; part of the 5S rRNA/L5/L18/L25 subcomplex. Contacts the 5S rRNA. Binds to the 5S rRNA independently of L5 and L18.

Its function is as follows. This is one of the proteins that binds to the 5S RNA in the ribosome where it forms part of the central protuberance. The polypeptide is Large ribosomal subunit protein bL25 (Rhodococcus jostii (strain RHA1)).